A 344-amino-acid chain; its full sequence is L-rhamnose-proton symporter (344 aa).

10 helical membrane passes run 4–24 (AITM…CFYA), 38–58 (WSVG…ALLL), 68–88 (FNLS…IGNI), 101–121 (MGIG…TPII), 137–157 (TLLG…AGQL), 175–195 (LLLA…MNAA), 214–234 (LPSY…FCFI), 259–279 (ILLS…YAWG), 290–310 (MSWM…GLVL), and 321–341 (VAVL…VGLG).

The protein belongs to the L-rhamnose transporter (TC 2.A.7.6) family.

Its subcellular location is the cell inner membrane. The catalysed reaction is L-rhamnopyranose(in) + H(+)(in) = L-rhamnopyranose(out) + H(+)(out). Its function is as follows. Uptake of L-rhamnose across the cytoplasmic membrane with the concomitant transport of protons into the cell (symport system). This is L-rhamnose-proton symporter from Salmonella paratyphi A (strain ATCC 9150 / SARB42).